The primary structure comprises 285 residues: 4-hydroxybenzoate octaprenyltransferase (285 aa).

7 consecutive transmembrane segments (helical) span residues 20 to 37, 96 to 116, 138 to 158, 166 to 186, 211 to 231, 234 to 254, and 262 to 282; these read IGIYLVLWPALWALWLAA, FFFVLCLLAFGLVLFLNPFTI, WPQAFLGAAFAWAIPMAFAAI, AWVIFGVTLVWALVYDTAYAV, IIGFFQAIMLLGFLWIGDLFG, WLYYGSVLIAAGFFVYHQYLL, and AFKAFLNNHWVGLVILIGIML.

Belongs to the UbiA prenyltransferase family. Mg(2+) serves as cofactor.

Its subcellular location is the cell inner membrane. The catalysed reaction is all-trans-octaprenyl diphosphate + 4-hydroxybenzoate = 4-hydroxy-3-(all-trans-octaprenyl)benzoate + diphosphate. It participates in cofactor biosynthesis; ubiquinone biosynthesis. Functionally, catalyzes the prenylation of para-hydroxybenzoate (PHB) with an all-trans polyprenyl group. Mediates the second step in the final reaction sequence of ubiquinone-8 (UQ-8) biosynthesis, which is the condensation of the polyisoprenoid side chain with PHB, generating the first membrane-bound Q intermediate 3-octaprenyl-4-hydroxybenzoate. The polypeptide is 4-hydroxybenzoate octaprenyltransferase (Hydrogenovibrio crunogenus (strain DSM 25203 / XCL-2) (Thiomicrospira crunogena)).